A 175-amino-acid chain; its full sequence is NADH-ubiquinone oxidoreductase chain 6 (175 aa).

Helical transmembrane passes span methionine 1–serine 21, serine 25–leucine 45, phenylalanine 47–valine 67, valine 88–leucine 108, and tyrosine 149–methionine 169.

The protein belongs to the complex I subunit 6 family. Core subunit of respiratory chain NADH dehydrogenase (Complex I) which is composed of 45 different subunits.

The protein localises to the mitochondrion inner membrane. It catalyses the reaction a ubiquinone + NADH + 5 H(+)(in) = a ubiquinol + NAD(+) + 4 H(+)(out). Its function is as follows. Core subunit of the mitochondrial membrane respiratory chain NADH dehydrogenase (Complex I) which catalyzes electron transfer from NADH through the respiratory chain, using ubiquinone as an electron acceptor. Essential for the catalytic activity and assembly of complex I. The sequence is that of NADH-ubiquinone oxidoreductase chain 6 (MT-ND6) from Balaenoptera musculus (Blue whale).